The chain runs to 436 residues: uncharacterized protein (436 aa).

The N-terminal stretch at 1 to 18 (MMKRFVALSMAIFSLSFA) is a signal peptide.

This is an uncharacterized protein from Aquifex aeolicus (strain VF5).